The chain runs to 906 residues: MLNANKSIIRLATYSIRNRIHHLRTLHSLNYINSRINIQDTNHIRPTCPCGSKQFMLESELDSALIEFLDNDDPFSDSEIKESDDLSKGQSHVYNGSPVTKNSILQIEKQQIQKSPRPTETNKRMQIRKDPDQNDNVDDDSLSSTFEFSDMDDDFMEALKAAEEITGNNTNCIKRTASTPLKKPIAKSMKNSSTPSKSAGKKYCKYIKTSSPSPSHYLIRESGSGVDILEGSPNKVQADNASPFRITSSFSSPSQIQNQGVGANPGPKSKAEQNVSSASQSSSPPMTVSQVRNPFKVPTQFRRNYSTRPITNQGSDTKKGNSHHTILLATQKPGVPFSNPSDRSYHKLEKTEGINEAQSEAKNVKPIILSNEQEYVLKQVLSGVSLFYTGSAGTGKSVLLRSIIKSLRDKYPKGVAVTASTGLAACNIGGITLHSFAGFGLGQGKVENLIKKIKRNKKAFTRWRETRVLIIDEISMVDGHLLNKLNEIAKNLRRNNRPFGGIQLVACGDFYQLPPVVKKTAHDGTELDDVEVFFAFESSAWKETIQRTITLKEIFRQKGDQRFINMLNNLRDGNVPDDTARDFCRLSRPLKCPEGIVPSELYATRYEVDMANSRKLNTIQGDVVVYNSVDTGILPEPQKTQVLTNFLAPQVLNLKVGAQVMCIKNFDDQLVNGTLGKVIDFVDRDTYMKSESKENPSTETSDEVSGLNDYIFNDFQKPKKVVKEDAPIAEQVLFTGQLSQKVEEESESSKRKSKLKDDLMKDYKNKKYPLVKFLLPDGITFRTVVVEPEQWTTEDEDGTVLVSRIQFPLILAWSLSIHKSQGQTLSKVVVDMKKIFENGQAYVALSRAVSRAGLQVLNFNRSKVASHRKVIEFYKNLSSHEKESRSGQQRLNFMQTSVKSVARAQI.

Disordered regions lie at residues 77–146 (DSEI…SSTF) and 229–297 (LEGS…PFKV). Over residues 78-87 (SEIKESDDLS) the composition is skewed to basic and acidic residues. Over residues 88–119 (KGQSHVYNGSPVTKNSILQIEKQQIQKSPRPT) the composition is skewed to polar residues. Residues 120-132 (ETNKRMQIRKDPD) are compositionally biased toward basic and acidic residues. Residues 234–261 (NKVQADNASPFRITSSFSSPSQIQNQGV) are compositionally biased toward polar residues. Positions 273-291 (QNVSSASQSSSPPMTVSQV) are enriched in low complexity. 390–397 (GSAGTGKS) is an ATP binding site. Residues 840-859 (QAYVALSRAVSRAGLQVLNF) mediate DNA binding.

This sequence belongs to the helicase family. PIF1 subfamily. In terms of assembly, monomer. Interacts with telomerase. Mg(2+) serves as cofactor.

The protein resides in the nucleus. It is found in the mitochondrion. The enzyme catalyses Couples ATP hydrolysis with the unwinding of duplex DNA at the replication fork by translocating in the 5'-3' direction. This creates two antiparallel DNA single strands (ssDNA). The leading ssDNA polymer is the template for DNA polymerase III holoenzyme which synthesizes a continuous strand.. It catalyses the reaction ATP + H2O = ADP + phosphate + H(+). Functionally, DNA-dependent ATPase and 5'-3' DNA helicase required for the maintenance of both mitochondrial and nuclear genome stability. Efficiently unwinds G-quadruplex (G4) DNA structures and forked RNA-DNA hybrids. Resolves G4 structures, preventing replication pausing and double-strand breaks (DSBs) at G4 motifs. Involved in the maintenance of telomeric DNA. Inhibits telomere elongation, de novo telomere formation and telomere addition to DSBs via catalytic inhibition of telomerase. Reduces the processivity of telomerase by displacing active telomerase from DNA ends. Releases telomerase by unwinding the short telomerase RNA/telomeric DNA hybrid that is the intermediate in the telomerase reaction. Involved in the maintenance of ribosomal (rDNA). Required for efficient fork arrest at the replication fork barrier within rDNA. Involved in the maintenance of mitochondrial (mtDNA). Required to maintain mtDNA under conditions that introduce dsDNA breaks in mtDNA, either preventing or repairing dsDNA breaks. May inhibit replication progression to allow time for repair. May have a general role in chromosomal replication by affecting Okazaki fragment maturation. May have a role in conjunction with DNA2 helicase/nuclease in 5'-flap extension during Okazaki fragment processing. The chain is ATP-dependent DNA helicase PIF1 from Candida albicans (strain SC5314 / ATCC MYA-2876) (Yeast).